The sequence spans 299 residues: Mitochondrial 2-oxodicarboxylate carrier (299 aa).

3 Solcar repeats span residues 11–100, 107–196, and 205–294; these read NEAS…YKKL, SPAL…VKNI, and LEFL…TYSW. Transmembrane regions (helical) follow at residues 17–37, 62–82, 100–120, 179–199, 211–231, and 274–290; these read ILAG…LDVV, MIFR…PILA, LLGY…LGSG, HGVF…IIPV, FGIG…FDVA, and IMRL…VYEY.

It belongs to the mitochondrial carrier (TC 2.A.29) family.

It localises to the mitochondrion inner membrane. It carries out the reaction 2-oxoadipate(in) + 2-oxoglutarate(out) = 2-oxoadipate(out) + 2-oxoglutarate(in). It catalyses the reaction hexanedioate(in) + 2-oxoglutarate(out) = hexanedioate(out) + 2-oxoglutarate(in). The enzyme catalyses L-2-aminoadipate(in) + 2-oxoglutarate(out) = L-2-aminoadipate(out) + 2-oxoglutarate(in). The catalysed reaction is glutarate(in) + 2-oxoglutarate(out) = glutarate(out) + 2-oxoglutarate(in). It carries out the reaction 2-oxoheptanedioate(in) + 2-oxoglutarate(out) = 2-oxoheptanedioate(out) + 2-oxoglutarate(in). It catalyses the reaction heptanedioate(in) + 2-oxoglutarate(out) = heptanedioate(out) + 2-oxoglutarate(in). The enzyme catalyses citrate(in) + 2-oxoglutarate(out) = citrate(out) + 2-oxoglutarate(in). Its function is as follows. Transports dicarboxylates across the inner membranes of mitochondria by a counter-exchange mechanism. Can transport 2-oxoadipate (2-oxohexanedioate), 2-oxoglutarate, adipate (hexanedioate), glutarate, and to a lesser extent, pimelate (heptanedioate), 2-oxopimelate (2-oxoheptanedioate), 2-aminoadipate (2-aminohexanedioate), oxaloacetate, and citrate. Plays a central role in catabolism of lysine, hydroxylysine, and tryptophan, by transporting common metabolite intermediates (such as 2-oxoadipate) into the mitochondria, where it is converted into acetyl-CoA and can enter the citric acid (TCA) cycle. The polypeptide is Mitochondrial 2-oxodicarboxylate carrier (SLC25A21) (Bos taurus (Bovine)).